The following is a 415-amino-acid chain: L-threonine dehydratase biosynthetic IlvA (415 aa).

At Lys-53 the chain carries N6-(pyridoxal phosphate)lysine. Pyridoxal 5'-phosphate-binding positions include Asn-80, 183–187 (GGGGL), and Ser-308. The ACT-like domain occupies 332–406 (HYFIIQFPQR…KGFEYREINK (75 aa)).

The protein belongs to the serine/threonine dehydratase family. Homotetramer. Requires pyridoxal 5'-phosphate as cofactor.

It carries out the reaction L-threonine = 2-oxobutanoate + NH4(+). It participates in amino-acid biosynthesis; L-isoleucine biosynthesis; 2-oxobutanoate from L-threonine: step 1/1. In terms of biological role, catalyzes the anaerobic formation of alpha-ketobutyrate and ammonia from threonine in a two-step reaction. The first step involved a dehydration of threonine and a production of enamine intermediates (aminocrotonate), which tautomerizes to its imine form (iminobutyrate). Both intermediates are unstable and short-lived. The second step is the nonenzymatic hydrolysis of the enamine/imine intermediates to form 2-ketobutyrate and free ammonia. In the low water environment of the cell, the second step is accelerated by RidA. The sequence is that of L-threonine dehydratase biosynthetic IlvA (ilvA) from Halalkalibacterium halodurans (strain ATCC BAA-125 / DSM 18197 / FERM 7344 / JCM 9153 / C-125) (Bacillus halodurans).